A 348-amino-acid polypeptide reads, in one-letter code: Dihydroorotate dehydrogenase (quinone) (348 aa).

Residues 65-69 and T89 contribute to the FMN site; that span reads AGLDK. K69 is a substrate binding site. 114 to 118 serves as a coordination point for substrate; it reads NRLGF. Residues N147 and N180 each coordinate FMN. Substrate is bound at residue N180. The active-site Nucleophile is S183. N185 provides a ligand contact to substrate. FMN is bound by residues K225 and T253. 254-255 contributes to the substrate binding site; sequence NT. FMN contacts are provided by residues G276, G305, and 326-327; that span reads YS.

It belongs to the dihydroorotate dehydrogenase family. Type 2 subfamily. In terms of assembly, monomer. Requires FMN as cofactor.

It localises to the cell membrane. It carries out the reaction (S)-dihydroorotate + a quinone = orotate + a quinol. Its pathway is pyrimidine metabolism; UMP biosynthesis via de novo pathway; orotate from (S)-dihydroorotate (quinone route): step 1/1. Functionally, catalyzes the conversion of dihydroorotate to orotate with quinone as electron acceptor. The chain is Dihydroorotate dehydrogenase (quinone) from Delftia acidovorans (strain DSM 14801 / SPH-1).